Consider the following 603-residue polypeptide: MKEALTSLFEKVTKLPTTSGCYKMLNENKKILYIGKAKNLRSRIKSYFLEKKSHKIKILMKNVKSIEVITTNSEYEALLLECNLIKTHKPDYNVKLKDGKGYPMIRITHEKYPRILKTRKIINDQSEYFGPFTNVKKLDQVLDFINKTFKIRKCKKKSNAPCLYYHMGQCLGVCYKENLEKEYQIEVNKAKSILNGNISEILSQIDIKLKLAVQKEDFETAIKLKEMKSSLIEINQIQIVTKANNLNIDYVYVHPGENVNTIIVLKYRDGKLVERDANFDESICKKDELVLQFLIQYYTSINMIVPDKIHIFLKDVDTKNVEKLINEIKNTKTEIIYKETKEILKIMEMAISNAKLSLREYENKSNKALESLKIFLEMDKLPKIIEGFDIAHLKGQETVASMVTFKMGIPFKENYKLYKLNSLLKGEIDDFRAIKEAILRRYSEIINKKLELPNLILIDGGKGQLSAAFSILKSLKIEDKVKVCSLAKKHETIFLITNKKGINLPQGHPALRILQNVRDEAHRKANGFNKKRREKITLLYKKIDGVGEKTAQKILKLIGTYKDILPLSENEISEKIKVNIKLAKRIKEFAIKENSIKNIDNDK.

The GIY-YIG domain occupies 17-94 (TTSGCYKMLN…IKTHKPDYNV (78 aa)). One can recognise a UVR domain in the interval 199–234 (SEILSQIDIKLKLAVQKEDFETAIKLKEMKSSLIEI).

This sequence belongs to the UvrC family. As to quaternary structure, interacts with UvrB in an incision complex.

The protein resides in the cytoplasm. Functionally, the UvrABC repair system catalyzes the recognition and processing of DNA lesions. UvrC both incises the 5' and 3' sides of the lesion. The N-terminal half is responsible for the 3' incision and the C-terminal half is responsible for the 5' incision. In Borrelia garinii subsp. bavariensis (strain ATCC BAA-2496 / DSM 23469 / PBi) (Borreliella bavariensis), this protein is UvrABC system protein C.